Reading from the N-terminus, the 139-residue chain is Protein COLD-REGULATED 15A, chloroplastic (139 aa).

A chloroplast-targeting transit peptide spans 1-40 (MAMSFSGAVLTGMASSFHSGAKQSSFGAVRVGQKTQFVVV).

It belongs to the COR15 protein family. Forms homooligomers which interact with potential stromal substrates in the stroma of chloroplasts. Interacts with the galactose headgroup of the chloroplast lipid monogalactosyldiacylglycerol (MGDG).

It localises to the plastid. It is found in the chloroplast stroma. Its function is as follows. Exhibits cryoprotective activity toward stromal substrates (e.g. LDH and rubisco) in chloroplasts and in protoplasts and confers freezing tolerance to plants in a CBF-dependent manner. Protectant against various stresses (e.g. cold, drought and heat stress) by preventing protein aggregation (e.g. LDH) and attenuating enzyme inactivation. Influences the intrinsic curvature of the inner membrane of the chloroplast envelope, and modulates the freeze-induced lamellar-to-hexagonal II phase transitions that occur in regions where the plasma membrane is brought into close apposition with the chloroplast envelope during freeze-induced osmotic contraction. Mediates a shift in the melting curves of phospholipids-containing membranes to lower temperatures. Involved in the regulation of leaf senescence by abscisic acid (ABA) in a VNI2-dependent manner. This is Protein COLD-REGULATED 15A, chloroplastic from Arabidopsis thaliana (Mouse-ear cress).